We begin with the raw amino-acid sequence, 218 residues long: DNA-directed RNA polymerase III subunit RPC7-like (218 aa).

The tract at residues 133–218 (LPKRPPKTTE…SDDNMDEAIY (86 aa)) is disordered. Residues 139–160 (KTTEDKEETIQKLETLEKKEEE) are compositionally biased toward basic and acidic residues. Composition is skewed to acidic residues over residues 161-193 (VTSE…EETD) and 201-218 (NGED…EAIY).

This sequence belongs to the eukaryotic RPC7 RNA polymerase subunit family. In terms of assembly, component of the RNA polymerase III (Pol III) complex consisting of 17 subunits. Pol III exists as two alternative complexes defined by the mutually exclusive incorporation of subunit POLR3G/RPC7alpha or POLR3GL/RPC7beta. Found in a trimeric complex with POLR3C/RPC3 and POLR3F/RPC6. Directly interacts with POLR3C. In terms of tissue distribution, widely expressed. Expressed in CD4-positive T cells.

It is found in the nucleus. In terms of biological role, DNA-dependent RNA polymerase catalyzes the transcription of DNA into RNA using the four ribonucleoside triphosphates as substrates. Specific peripheric component of RNA polymerase III which synthesizes small RNAs, such as 5S rRNA and tRNAs. The sequence is that of DNA-directed RNA polymerase III subunit RPC7-like from Homo sapiens (Human).